Reading from the N-terminus, the 331-residue chain is Ribosomal RNA small subunit methyltransferase C (331 aa).

This sequence belongs to the methyltransferase superfamily. RsmC family. In terms of assembly, monomer.

Its subcellular location is the cytoplasm. It carries out the reaction guanosine(1207) in 16S rRNA + S-adenosyl-L-methionine = N(2)-methylguanosine(1207) in 16S rRNA + S-adenosyl-L-homocysteine + H(+). In terms of biological role, specifically methylates the guanine in position 1207 of 16S rRNA in the 30S particle. This Ectopseudomonas mendocina (strain ymp) (Pseudomonas mendocina) protein is Ribosomal RNA small subunit methyltransferase C.